Here is a 35-residue protein sequence, read N- to C-terminus: GLIRPSKRCIGGGDPCEFHRPYTCCSGYCIVFVCA.

A propeptide spanning residues 1-8 (GLIRPSKR) is cleaved from the precursor. 3 disulfides stabilise this stretch: cysteine 9–cysteine 25, cysteine 16–cysteine 29, and cysteine 24–cysteine 34.

Belongs to the conotoxin O1 superfamily. As to expression, expressed by the venom duct.

Its subcellular location is the secreted. Probable neurotoxin with unknown target. Possibly targets ion channels. The sequence is that of Conotoxin Cal6.1f from Californiconus californicus (California cone).